An 86-amino-acid chain; its full sequence is Small nuclear ribonucleoprotein F (86 aa).

At serine 2 the chain carries N-acetylserine. The Sm domain occupies 6-78; the sequence is NPKPFLNGLT…VLYIRGVEEE (73 aa).

Belongs to the snRNP Sm proteins family. SmF/LSm6 subfamily. In terms of assembly, core component of the spliceosomal U1, U2, U4 and U5 small nuclear ribonucleoproteins (snRNPs), the building blocks of the spliceosome. Most spliceosomal snRNPs contain a common set of Sm proteins, SNRPB, SNRPD1, SNRPD2, SNRPD3, SNRPE, SNRPF and SNRPG that assemble in a heptameric protein ring on the Sm site of the small nuclear RNA to form the core snRNP. Component of the U1 snRNP. The U1 snRNP is composed of the U1 snRNA and the 7 core Sm proteins SNRPB, SNRPD1, SNRPD2, SNRPD3, SNRPE, SNRPF and SNRPG, and at least three U1 snRNP-specific proteins SNRNP70/U1-70K, SNRPA/U1-A and SNRPC/U1-C. Component of the U4/U6-U5 tri-snRNP complex composed of the U4, U6 and U5 snRNAs and at least PRPF3, PRPF4, PRPF6, PRPF8, PRPF31, SNRNP200, TXNL4A, SNRNP40, SNRPB, SNRPD1, SNRPD2, SNRPD3, SNRPE, SNRPF, SNRPG, DDX23, CD2BP2, PPIH, SNU13, EFTUD2, SART1 and USP39, plus LSM2, LSM3, LSM4, LSM5, LSM6, LSM7 and LSM8. Component of the U7 snRNP complex, or U7 Sm protein core complex, that is composed of the U7 snRNA and at least LSM10, LSM11, SNRPB, SNRPD3, SNRPE, SNRPF and SNRPG; the complex does not contain SNRPD1 and SNRPD2. Component of the minor spliceosome, which splices U12-type introns. Part of the SMN-Sm complex that contains SMN1, GEMIN2/SIP1, DDX20/GEMIN3, GEMIN4, GEMIN5, GEMIN6, GEMIN7, GEMIN8, STRAP/UNRIP and the Sm proteins SNRPB, SNRPD1, SNRPD2, SNRPD3, SNRPE, SNRPF and SNRPG; catalyzes core snRNPs assembly. Forms a 6S pICln-Sm complex composed of CLNS1A/pICln, SNRPD1, SNRPD2, SNRPE, SNRPF and SNRPG; ring-like structure where CLNS1A/pICln mimics additional Sm proteins and which is unable to assemble into the core snRNP. Interacts with GEMIN2 (via N-terminus); the interaction is direct. Interacts with SNRPD2; the interaction is direct. Interacts with SNRPE; the interaction is direct.

It is found in the cytoplasm. Its subcellular location is the cytosol. The protein resides in the nucleus. In terms of biological role, plays a role in pre-mRNA splicing as a core component of the spliceosomal U1, U2, U4 and U5 small nuclear ribonucleoproteins (snRNPs), the building blocks of the spliceosome. Component of both the pre-catalytic spliceosome B complex and activated spliceosome C complexes. As a component of the minor spliceosome, involved in the splicing of U12-type introns in pre-mRNAs. As part of the U7 snRNP it is involved in histone 3'-end processing. This is Small nuclear ribonucleoprotein F (SNRPF) from Homo sapiens (Human).